We begin with the raw amino-acid sequence, 172 residues long: Large ribosomal subunit protein uL10 (172 aa).

It belongs to the universal ribosomal protein uL10 family. Part of the ribosomal stalk of the 50S ribosomal subunit. The N-terminus interacts with L11 and the large rRNA to form the base of the stalk. The C-terminus forms an elongated spine to which L12 dimers bind in a sequential fashion forming a multimeric L10(L12)X complex.

In terms of biological role, forms part of the ribosomal stalk, playing a central role in the interaction of the ribosome with GTP-bound translation factors. This is Large ribosomal subunit protein uL10 from Chlorobium limicola (strain DSM 245 / NBRC 103803 / 6330).